The following is a 405-amino-acid chain: Tryptophan synthase beta chain (405 aa).

K98 is subject to N6-(pyridoxal phosphate)lysine.

The protein belongs to the TrpB family. Tetramer of two alpha and two beta chains. Pyridoxal 5'-phosphate is required as a cofactor.

It carries out the reaction (1S,2R)-1-C-(indol-3-yl)glycerol 3-phosphate + L-serine = D-glyceraldehyde 3-phosphate + L-tryptophan + H2O. Its pathway is amino-acid biosynthesis; L-tryptophan biosynthesis; L-tryptophan from chorismate: step 5/5. Its function is as follows. The beta subunit is responsible for the synthesis of L-tryptophan from indole and L-serine. This is Tryptophan synthase beta chain from Xylella fastidiosa (strain M23).